The chain runs to 60 residues: Potassium channel toxin alpha-KTx 3.16 (60 aa).

The signal sequence occupies residues 1-23 (MKVFSAVLIILFVCSMIIGISEG). 3 disulfide bridges follow: cysteine 30-cysteine 50, cysteine 36-cysteine 55, and cysteine 40-cysteine 57.

Belongs to the short scorpion toxin superfamily. Potassium channel inhibitor family. Alpha-KTx 03 subfamily. Expressed by the venom gland.

It is found in the secreted. Functionally, potassium channel inhibitor. This chain is Potassium channel toxin alpha-KTx 3.16, found in Mesobuthus gibbosus (Mediterranean checkered scorpion).